Here is a 496-residue protein sequence, read N- to C-terminus: Ammonium transporter 1 member 2 (496 aa).

11 helical membrane passes run 39 to 59 (LLFS…LCAG), 74 to 94 (VLDA…FAFG), 120 to 140 (FFLF…GSIA), 148 to 168 (YLIY…HWIW), 192 to 212 (FAGS…GALI), 236 to 256 (LVVL…PGSF), 274 to 296 (SAVG…TTLF), 307 to 327 (VIDV…GCSV), 331 to 351 (WAAI…NALA), 360 to 380 (LEAA…TALF), and 412 to 432 (IVVI…LFLV).

The protein belongs to the ammonia transporter channel (TC 1.A.11.2) family. As to expression, expressed in exodermis, sclerenchyma, endodermis and pericycle cells of primary root tips.

The protein resides in the membrane. Functionally, ammonium transporter probably involved in ammonium uptake from the soil and ammonium uptake and retrieval in the vascular system. This is Ammonium transporter 1 member 2 (AMT1-2) from Oryza sativa subsp. japonica (Rice).